Here is a 502-residue protein sequence, read N- to C-terminus: MTLAYDDALEILKSQLQSFETDIKMEEVGVVYAVGDGVARAYGLDNVMANELLEFDSGEAGLAFNLEEDNVGIIILGSESGIKEGSIVKRTGRILDAPVGEELVGRVIDPLGNPLDGKGPINAKHRSPVEKIAPGIVKRKSVHEPLQTGIKAIDAMIPIGRGQRELIIGDRATGKTTVAIDTILNQKDTDVYCIYVAIGQKKSTTARIIELLEREGAMKYTTVVVASATDPAPLQYLAPFTGCTIGEYFRDNGKHALIVYDDLSKHAEAYRQLSLLVRRPPGREAYPGDVFYLHSRLLERAAKLYDELGAGSLTALPIIETKAGDVSAYIPTNVISITDGQIYLEPDLFNKGIRPAINVGLSVSRVGGSAQIKAMKQVAGTLRLDLAQFRELEAFMQFASDLDKATQDTINRGLRLVELLKQGPYSPIPVEKQVIAIYAGTNGYLDDIPVSSVRKFEMELYGFLDANFKDLLDELKTKKAIDDSVKSKLKTALDKFKASFIP.

169-176 contacts ATP; that stretch reads GDRATGKT.

The protein belongs to the ATPase alpha/beta chains family. F-type ATPases have 2 components, CF(1) - the catalytic core - and CF(0) - the membrane proton channel. CF(1) has five subunits: alpha(3), beta(3), gamma(1), delta(1), epsilon(1). CF(0) has three main subunits: a(1), b(2) and c(9-12). The alpha and beta chains form an alternating ring which encloses part of the gamma chain. CF(1) is attached to CF(0) by a central stalk formed by the gamma and epsilon chains, while a peripheral stalk is formed by the delta and b chains.

The protein localises to the cell inner membrane. It carries out the reaction ATP + H2O + 4 H(+)(in) = ADP + phosphate + 5 H(+)(out). Functionally, produces ATP from ADP in the presence of a proton gradient across the membrane. The alpha chain is a regulatory subunit. This chain is ATP synthase subunit alpha, found in Hydrogenobaculum sp. (strain Y04AAS1).